An 89-amino-acid chain; its full sequence is Small ribosomal subunit protein uS15 (89 aa).

The protein belongs to the universal ribosomal protein uS15 family. Part of the 30S ribosomal subunit. Forms a bridge to the 50S subunit in the 70S ribosome, contacting the 23S rRNA.

One of the primary rRNA binding proteins, it binds directly to 16S rRNA where it helps nucleate assembly of the platform of the 30S subunit by binding and bridging several RNA helices of the 16S rRNA. Its function is as follows. Forms an intersubunit bridge (bridge B4) with the 23S rRNA of the 50S subunit in the ribosome. This chain is Small ribosomal subunit protein uS15, found in Nitrosomonas eutropha (strain DSM 101675 / C91 / Nm57).